Consider the following 379-residue polypeptide: Cytochrome b (379 aa).

The next 4 helical transmembrane spans lie at F33–M53, W77–V98, W113–L133, and F178–L198. Residues H83 and H97 each contribute to the heme b site. Positions 182 and 196 each coordinate heme b. Position 201 (H201) interacts with a ubiquinone. 4 helical membrane-spanning segments follow: residues T226–Y246, L288–Q308, L320–G340, and F347–P367.

Belongs to the cytochrome b family. In terms of assembly, the cytochrome bc1 complex contains 11 subunits: 3 respiratory subunits (MT-CYB, CYC1 and UQCRFS1), 2 core proteins (UQCRC1 and UQCRC2) and 6 low-molecular weight proteins (UQCRH/QCR6, UQCRB/QCR7, UQCRQ/QCR8, UQCR10/QCR9, UQCR11/QCR10 and a cleavage product of UQCRFS1). This cytochrome bc1 complex then forms a dimer. The cofactor is heme b.

The protein resides in the mitochondrion inner membrane. Functionally, component of the ubiquinol-cytochrome c reductase complex (complex III or cytochrome b-c1 complex) that is part of the mitochondrial respiratory chain. The b-c1 complex mediates electron transfer from ubiquinol to cytochrome c. Contributes to the generation of a proton gradient across the mitochondrial membrane that is then used for ATP synthesis. The chain is Cytochrome b (MT-CYB) from Lepilemur ankaranensis (Ankarana sportive lemur).